The chain runs to 304 residues: UDP-3-O-acyl-N-acetylglucosamine deacetylase (304 aa).

H78, H237, and D241 together coordinate Zn(2+). Residue H264 is the Proton donor of the active site.

It belongs to the LpxC family. The cofactor is Zn(2+).

It catalyses the reaction a UDP-3-O-[(3R)-3-hydroxyacyl]-N-acetyl-alpha-D-glucosamine + H2O = a UDP-3-O-[(3R)-3-hydroxyacyl]-alpha-D-glucosamine + acetate. The protein operates within glycolipid biosynthesis; lipid IV(A) biosynthesis; lipid IV(A) from (3R)-3-hydroxytetradecanoyl-[acyl-carrier-protein] and UDP-N-acetyl-alpha-D-glucosamine: step 2/6. In terms of biological role, catalyzes the hydrolysis of UDP-3-O-myristoyl-N-acetylglucosamine to form UDP-3-O-myristoylglucosamine and acetate, the committed step in lipid A biosynthesis. The protein is UDP-3-O-acyl-N-acetylglucosamine deacetylase of Marinobacter nauticus (strain ATCC 700491 / DSM 11845 / VT8) (Marinobacter aquaeolei).